A 940-amino-acid chain; its full sequence is UvrABC system protein A (940 aa).

An ATP-binding site is contributed by 31-38; sequence GLSGSGKS. The C4-type zinc finger occupies 252 to 279; sequence CPHCGYSMQELEPRLFSFNNPAGACGTC. ABC transporter domains follow at residues 309–586 and 606–936; these read WDQK…PDSL and RDKN…RFLK. Residue 639–646 participates in ATP binding; sequence GVSGSGKS. The C4-type zinc finger occupies 739–765; that stretch reads CEACQGDGVIKVEMHFLPDVYVPCDVC.

It belongs to the ABC transporter superfamily. UvrA family. As to quaternary structure, forms a heterotetramer with UvrB during the search for lesions.

The protein localises to the cytoplasm. The UvrABC repair system catalyzes the recognition and processing of DNA lesions. UvrA is an ATPase and a DNA-binding protein. A damage recognition complex composed of 2 UvrA and 2 UvrB subunits scans DNA for abnormalities. When the presence of a lesion has been verified by UvrB, the UvrA molecules dissociate. In Vibrio vulnificus (strain YJ016), this protein is UvrABC system protein A.